We begin with the raw amino-acid sequence, 399 residues long: S-adenosylmethionine synthase (399 aa).

His17 contributes to the ATP binding site. Position 19 (Asp19) interacts with Mg(2+). Glu45 is a binding site for K(+). Glu58 and Gln101 together coordinate L-methionine. Positions 101–111 (QSPDIAQGVDE) are flexible loop. ATP contacts are provided by residues 177–179 (DAK), 244–245 (RF), Asp253, 259–260 (RK), Ala276, and Lys280. Asp253 contacts L-methionine. Lys284 lines the L-methionine pocket.

The protein belongs to the AdoMet synthase family. As to quaternary structure, homotetramer; dimer of dimers. The cofactor is Mg(2+). K(+) is required as a cofactor.

It is found in the cytoplasm. It catalyses the reaction L-methionine + ATP + H2O = S-adenosyl-L-methionine + phosphate + diphosphate. It functions in the pathway amino-acid biosynthesis; S-adenosyl-L-methionine biosynthesis; S-adenosyl-L-methionine from L-methionine: step 1/1. Catalyzes the formation of S-adenosylmethionine (AdoMet) from methionine and ATP. The overall synthetic reaction is composed of two sequential steps, AdoMet formation and the subsequent tripolyphosphate hydrolysis which occurs prior to release of AdoMet from the enzyme. This Listeria welshimeri serovar 6b (strain ATCC 35897 / DSM 20650 / CCUG 15529 / CIP 8149 / NCTC 11857 / SLCC 5334 / V8) protein is S-adenosylmethionine synthase.